A 158-amino-acid chain; its full sequence is Protein E6 (158 aa).

Zinc fingers lie at residues 32-68 (CVYC…CHKC) and 105-141 (CLRC…CHSC). The PDZ-binding domain signature appears at 156 to 158 (TQV).

The protein belongs to the papillomaviridae E6 protein family. In terms of assembly, forms homodimers. Interacts with ubiquitin-protein ligase UBE3A/E6-AP and thus forms a complex with human TP53. Interacts with human NFX1 and MAGI3. Interacts with human IRF3; this interaction inhibits the establishment of antiviral state. Interacts with human TYK2; this interaction inhibits JAK-STAT activation by interferon alpha. Interacts with host DLG1; this interaction leads to the proteasomal degradation of DLG1.

It localises to the host cytoplasm. It is found in the host nucleus. Functionally, plays a major role in the induction and maintenance of cellular transformation. Acts mainly as an oncoprotein by stimulating the destruction of many host cell key regulatory proteins. E6 associates with host UBE3A/E6-AP ubiquitin-protein ligase, and inactivates tumor suppressors TP53 and TP73 by targeting them to the 26S proteasome for degradation. In turn, DNA damage and chromosomal instabilities increase and lead to cell proliferation and cancer development. The complex E6/E6AP targets several other substrates to degradation via the proteasome including host DLG1 or NFX1, a repressor of human telomerase reverse transcriptase (hTERT). The resulting increased expression of hTERT prevents the shortening of telomere length leading to cell immortalization. Other cellular targets including BAK1, Fas-associated death domain-containing protein (FADD) and procaspase 8, are degraded by E6/E6AP causing inhibition of apoptosis. E6 also inhibits immune response by interacting with host IRF3 and TYK2. These interactions prevent IRF3 transcriptional activities and inhibit TYK2-mediated JAK-STAT activation by interferon alpha resulting in inhibition of the interferon signaling pathway. This is Protein E6 from Homo sapiens (Human).